Reading from the N-terminus, the 429-residue chain is Adenylosuccinate synthetase (429 aa).

GTP-binding positions include 12 to 18 (GDEGKGK) and 40 to 42 (GHT). D13 (proton acceptor) is an active-site residue. D13 and G40 together coordinate Mg(2+). Residues 13–16 (DEGK), 38–41 (NAGH), T129, R143, Q223, T238, and R302 each bind IMP. The active-site Proton donor is the H41. 298 to 304 (TVTGRKR) serves as a coordination point for substrate. GTP contacts are provided by residues R304, 330–332 (KLD), and 412–414 (STS).

The protein belongs to the adenylosuccinate synthetase family. In terms of assembly, homodimer. It depends on Mg(2+) as a cofactor.

The protein resides in the cytoplasm. The catalysed reaction is IMP + L-aspartate + GTP = N(6)-(1,2-dicarboxyethyl)-AMP + GDP + phosphate + 2 H(+). The protein operates within purine metabolism; AMP biosynthesis via de novo pathway; AMP from IMP: step 1/2. In terms of biological role, plays an important role in the de novo pathway of purine nucleotide biosynthesis. Catalyzes the first committed step in the biosynthesis of AMP from IMP. This is Adenylosuccinate synthetase from Sphingopyxis alaskensis (strain DSM 13593 / LMG 18877 / RB2256) (Sphingomonas alaskensis).